A 313-amino-acid polypeptide reads, in one-letter code: Beta-ketoacyl-[acyl-carrier-protein] synthase III (313 aa).

Catalysis depends on residues Cys112 and His238. Residues 239-243 (QANIR) form an ACP-binding region. The active site involves Asn268.

It belongs to the thiolase-like superfamily. FabH family. In terms of assembly, homodimer.

It is found in the cytoplasm. The enzyme catalyses malonyl-[ACP] + acetyl-CoA + H(+) = 3-oxobutanoyl-[ACP] + CO2 + CoA. The protein operates within lipid metabolism; fatty acid biosynthesis. In terms of biological role, catalyzes the condensation reaction of fatty acid synthesis by the addition to an acyl acceptor of two carbons from malonyl-ACP. Catalyzes the first condensation reaction which initiates fatty acid synthesis and may therefore play a role in governing the total rate of fatty acid production. Possesses both acetoacetyl-ACP synthase and acetyl transacylase activities. Its substrate specificity determines the biosynthesis of branched-chain and/or straight-chain of fatty acids. The protein is Beta-ketoacyl-[acyl-carrier-protein] synthase III of Staphylococcus saprophyticus subsp. saprophyticus (strain ATCC 15305 / DSM 20229 / NCIMB 8711 / NCTC 7292 / S-41).